Reading from the N-terminus, the 563-residue chain is Type 2 DNA topoisomerase 6 subunit B (563 aa).

ATP contacts are provided by residues asparagine 46, aspartate 78, 99-100, 109-116, and lysine 471; these read TK and GQQGIGIS.

The protein belongs to the TOP6B family. As to quaternary structure, homodimer. Heterotetramer of two Top6A and two Top6B chains.

It catalyses the reaction ATP-dependent breakage, passage and rejoining of double-stranded DNA.. Functionally, relaxes both positive and negative superturns and exhibits a strong decatenase activity. This is Type 2 DNA topoisomerase 6 subunit B from Thermococcus onnurineus (strain NA1).